Consider the following 301-residue polypeptide: uncharacterized protein (301 aa).

Active-site charge relay system residues include serine 44 and tyrosine 107. Catalysis depends on tyrosine 133, which acts as the Proton donor. Lysine 162 functions as the Schiff-base intermediate with substrate in the catalytic mechanism.

It belongs to the DapA family. Homotetramer.

The protein resides in the cytoplasm. This is an uncharacterized protein from Pyrobaculum neutrophilum (strain DSM 2338 / JCM 9278 / NBRC 100436 / V24Sta) (Thermoproteus neutrophilus).